A 352-amino-acid polypeptide reads, in one-letter code: Gap junction alpha-4 protein (352 aa).

The Cytoplasmic portion of the chain corresponds to 2–23 (GDWEFLEKLLDQVQEHSTSIGK). Residues 24 to 46 (IWLMVLFIFRILILGLAGESVWG) traverse the membrane as a helical segment. The Extracellular segment spans residues 47–76 (DEQSDFTCNTEQPGCTNVCYDKAFPISHVR). A helical membrane pass occupies residues 77–99 (YWVLQFLFVSTPTLFYLGHVIYL). Residues 100 to 153 (SRKEEKLKQKESELRALDDKEQVEQAIAIIEKKKLKLYIQEDGTVKIKGALMYT) are Cytoplasmic-facing. A helical membrane pass occupies residues 154 to 176 (YLTSVIFKSIFEAGFLLGQWYLY). Topologically, residues 177 to 208 (GFVMTPIYVCERVPCPHKVDCFVSRPMEKTIF) are extracellular. The helical transmembrane segment at 209–231 (IIFMLVVSLISLFLNVLELIHLI) threads the bilayer. The Cytoplasmic portion of the chain corresponds to 232–352 (CKSMIHALKK…SSSASKKQYV (121 aa)). The disordered stretch occupies residues 332–352 (HSTVEKASTRASSSASKKQYV). Residues 340–352 (TRASSSASKKQYV) are compositionally biased toward low complexity.

It belongs to the connexin family. Alpha-type (group II) subfamily. As to quaternary structure, a connexon is composed of a hexamer of connexins. In terms of tissue distribution, expressed in ovarian somatic cells, heart, leg muscle, liver and eye but not in brain.

The protein resides in the cell membrane. The protein localises to the cell junction. It is found in the gap junction. Functionally, one gap junction consists of a cluster of closely packed pairs of transmembrane channels, the connexons, through which materials of low MW diffuse from one cell to a neighboring cell. The protein is Gap junction alpha-4 protein (gja4) of Xenopus laevis (African clawed frog).